Consider the following 331-residue polypeptide: 6-phosphogluconolactonase (331 aa).

An N6-acetyllysine modification is found at Lys-287.

Belongs to the cycloisomerase 2 family.

The catalysed reaction is 6-phospho-D-glucono-1,5-lactone + H2O = 6-phospho-D-gluconate + H(+). It functions in the pathway carbohydrate degradation; pentose phosphate pathway; D-ribulose 5-phosphate from D-glucose 6-phosphate (oxidative stage): step 2/3. Its function is as follows. Catalyzes the hydrolysis of 6-phosphogluconolactone to 6-phosphogluconate. This Escherichia coli O139:H28 (strain E24377A / ETEC) protein is 6-phosphogluconolactonase.